A 24-amino-acid chain; its full sequence is Brevinin-1GRa (24 aa).

Expressed by the skin glands.

It localises to the secreted. In terms of biological role, antimicrobial peptide active against the Gram-positive bacterium S.aureus (MIC=12.5 uM) and against the Gram-negative bacteria E.coli (MIC=25 uM). The polypeptide is Brevinin-1GRa (Odorrana grahami (Yunnanfu frog)).